The chain runs to 433 residues: UDP-N-acetylglucosamine 1-carboxyvinyltransferase 2 (433 aa).

23–24 serves as a coordination point for phosphoenolpyruvate; it reads KN. Arg-96 is a binding site for UDP-N-acetyl-alpha-D-glucosamine. Cys-120 serves as the catalytic Proton donor. Residue Cys-120 is modified to 2-(S-cysteinyl)pyruvic acid O-phosphothioketal. Residues 125 to 129, Asp-308, and Val-330 contribute to the UDP-N-acetyl-alpha-D-glucosamine site; that span reads RPIDL.

Belongs to the EPSP synthase family. MurA subfamily.

Its subcellular location is the cytoplasm. The enzyme catalyses phosphoenolpyruvate + UDP-N-acetyl-alpha-D-glucosamine = UDP-N-acetyl-3-O-(1-carboxyvinyl)-alpha-D-glucosamine + phosphate. It functions in the pathway cell wall biogenesis; peptidoglycan biosynthesis. In terms of biological role, cell wall formation. Adds enolpyruvyl to UDP-N-acetylglucosamine. This Enterococcus faecalis (strain ATCC 700802 / V583) protein is UDP-N-acetylglucosamine 1-carboxyvinyltransferase 2.